A 583-amino-acid polypeptide reads, in one-letter code: 2-succinyl-5-enolpyruvyl-6-hydroxy-3-cyclohexene-1-carboxylate synthase (583 aa).

This sequence belongs to the TPP enzyme family. MenD subfamily. In terms of assembly, homodimer. The cofactor is Mg(2+). Mn(2+) serves as cofactor. Thiamine diphosphate is required as a cofactor.

The enzyme catalyses isochorismate + 2-oxoglutarate + H(+) = 5-enolpyruvoyl-6-hydroxy-2-succinyl-cyclohex-3-ene-1-carboxylate + CO2. It participates in quinol/quinone metabolism; 1,4-dihydroxy-2-naphthoate biosynthesis; 1,4-dihydroxy-2-naphthoate from chorismate: step 2/7. It functions in the pathway cofactor biosynthesis; phylloquinone biosynthesis. Its function is as follows. Catalyzes the thiamine diphosphate-dependent decarboxylation of 2-oxoglutarate and the subsequent addition of the resulting succinic semialdehyde-thiamine pyrophosphate anion to isochorismate to yield 2-succinyl-5-enolpyruvyl-6-hydroxy-3-cyclohexene-1-carboxylate (SEPHCHC). The chain is 2-succinyl-5-enolpyruvyl-6-hydroxy-3-cyclohexene-1-carboxylate synthase from Nostoc sp. (strain PCC 7120 / SAG 25.82 / UTEX 2576).